The sequence spans 170 residues: MAEASEFNFTIKRKQRTMSDRRTREDTKQKKIEEKSDIDLVDSASVYSQESSRSNYSDAYDKLKREPMVEESNDAKYRNFEFSEDEEVHRPSSKASDKSYREMKRKHDDINTSDSILEKLSELNLEIEKIKQMNQPITIDAAFNMILRNVDNLTIRQKQALINAIVNSMN.

2 disordered regions span residues 1–67 and 83–106; these read MAEA…KREP and SEDE…MKRK. Residues 17–38 are compositionally biased toward basic and acidic residues; that stretch reads TMSDRRTREDTKQKKIEEKSDI. The span at 45–57 shows a compositional bias: polar residues; sequence SVYSQESSRSNYS.

This sequence belongs to the rotavirus NSP5 family. Homodimer. Interacts with VP1. Interacts with VP2. Interacts with NSP2 and NSP6. In terms of processing, O-glycosylated.

Its subcellular location is the host cytoplasm. Its function is as follows. Plays an essential role in the viral genome replication. Participates, together with NSP2, in the formation of viral factories (viroplasms) which are large inclusions in the host cytoplasm where replication intermediates are assembled and viral RNA replication takes place. Orchestrates the recruitment of viroplasmic proteins such as capsid proteins to these factories. The protein is Non-structural protein 5 of Rotavirus B (isolate RVB/Human/China/ADRV/1982) (RV-B).